The sequence spans 217 residues: Proteasome subunit beta type-6-B like protein (217 aa).

The propeptide at 1–16 (MERHFMDSQIKGVSTG) is removed in mature form. Thr-17 serves as the catalytic Nucleophile.

It belongs to the peptidase T1B family. The 26S proteasome consists of a 20S proteasome core and two 19S regulatory subunits. The 20S proteasome core is composed of 28 subunits that are arranged in four stacked rings, resulting in a barrel-shaped structure. The two end rings are each formed by seven alpha subunits, and the two central rings are each formed by seven beta subunits. The catalytic chamber with the active sites is on the inside of the barrel.

Its subcellular location is the cytoplasm. It is found in the nucleus. It catalyses the reaction Cleavage of peptide bonds with very broad specificity.. In terms of biological role, the proteasome is a multicatalytic proteinase complex which is characterized by its ability to cleave peptides with Arg, Phe, Tyr, Leu, and Glu adjacent to the leaving group at neutral or slightly basic pH. The proteasome has an ATP-dependent proteolytic activity. This subunit is involved in antigen processing to generate class I binding peptides. The chain is Proteasome subunit beta type-6-B like protein (psmb6l-b) from Salmo salar (Atlantic salmon).